The chain runs to 304 residues: MKTPLIVICGPTASGKSGLAIDLSVRLNSIIISADSRQVYREFDIGTAKPSIDEQKLIPHYLIDICEPTESLTLAQYQEKAQLIIHSFSSVVSPILVGGTGLYLKSVVKGMKIPRVSPQPQLRSQLEALGQSYLYNLLSQVDPIASQKIHPHDQIRTIRALEVFYVTGKPISSQQGENPPDYPIIQIGLDCEVNALEKRIQQRTEQMIESGLVEEVEKLIDKYGENLPLLDTLGYAEMKQYLAGKISLSEAKELTVLHTRQFAKRQRTWFRAYPEIHWFDANAPHLLDQVTQLIRDNCSLIVSH.

10–17 (GPTASGKS) is an ATP binding site. 12–17 (TASGKS) contacts substrate. The interaction with substrate tRNA stretch occupies residues 35-38 (DSRQ).

Belongs to the IPP transferase family. In terms of assembly, monomer. It depends on Mg(2+) as a cofactor.

It catalyses the reaction adenosine(37) in tRNA + dimethylallyl diphosphate = N(6)-dimethylallyladenosine(37) in tRNA + diphosphate. Catalyzes the transfer of a dimethylallyl group onto the adenine at position 37 in tRNAs that read codons beginning with uridine, leading to the formation of N6-(dimethylallyl)adenosine (i(6)A). The sequence is that of tRNA dimethylallyltransferase from Gloeothece citriformis (strain PCC 7424) (Cyanothece sp. (strain PCC 7424)).